The chain runs to 503 residues: Carboxyl-terminal PDZ ligand of neuronal nitric oxide synthase protein (503 aa).

Positions 26 to 191 constitute a PID domain; that stretch reads FQHGISFEAK…ESERNSDGSG (166 aa). The disordered stretch occupies residues 170-212; it reads HTQQNADGQEDGESERNSDGSGDPGRQLTGAERVSTATAEETD. A phosphoserine mark is found at S183, S187, S190, and S262. The tract at residues 266 to 285 is disordered; it reads LLPSSSSSKPPGLGTGTPLS. Residues 319 to 360 adopt a coiled-coil conformation; sequence AAEAAARLEAQARVHQLLLQNKDMLQHISLLVKQVQELELKL. Phosphoserine is present on residues S368, S371, S398, and S414. Positions 491 to 503 are interaction with NOS1; that stretch reads QELGDSLDDEIAV. The PDZ-binding signature appears at 501-503; that stretch reads IAV.

In terms of assembly, interacts with the PDZ domain of NOS1 or the second PDZ domain of DLG4 through its C-terminus. Interacts with RASD1 and SYN1, SYN2 and SYN3 via its PID domain. Forms a ternary complex with NOS1 and RASD1. Forms a ternary complex with NOS1 and SYN1. Mainly expressed in brain. Highly expressed in accessory olfactory bulb, caudate-putamen, cerebellum, cerebral cortex, dentate gyrus of the hippocampus, islands of Calleja, olfactory bulb and supraoptic nucleus. Expressed in kidney glomeruli podocytes (at protein level).

The protein localises to the cell projection. It is found in the filopodium. It localises to the podosome. Its function is as follows. Adapter protein involved in neuronal nitric-oxide (NO) synthesis regulation via its association with nNOS/NOS1. The complex formed with NOS1 and synapsins is necessary for specific NO and synapsin functions at a presynaptic level. Mediates an indirect interaction between NOS1 and RASD1 leading to enhance the ability of NOS1 to activate RASD1. Competes with DLG4 for interaction with NOS1, possibly affecting NOS1 activity by regulating the interaction between NOS1 and DLG4. In kidney podocytes, plays a role in podosomes and filopodia formation through CDC42 activation. This chain is Carboxyl-terminal PDZ ligand of neuronal nitric oxide synthase protein, found in Rattus norvegicus (Rat).